Consider the following 105-residue polypeptide: Sulfite reductase, dissimilatory-type subunit gamma (105 aa).

This sequence belongs to the DsrC/TusE family. In terms of assembly, heterohexamer of two alpha, two beta and two gamma subunits.

Its subcellular location is the cytoplasm. The enzyme catalyses [DsrC protein]-trisulfide + NAD(+) + 3 H2O = [DsrC protein]-dithiol + sulfite + NADH + 3 H(+). Its function is as follows. Catalyzes the reduction of sulfite to sulfide. This is the terminal oxidation reaction in sulfate respiration, a process catalyzed by the sulfate-reducing bacteria. The sequence is that of Sulfite reductase, dissimilatory-type subunit gamma (dsvC) from Nitratidesulfovibrio vulgaris (strain ATCC 29579 / DSM 644 / CCUG 34227 / NCIMB 8303 / VKM B-1760 / Hildenborough) (Desulfovibrio vulgaris).